We begin with the raw amino-acid sequence, 74 residues long: Ubiquitin-like protein FUBI (74 aa).

The protein belongs to the ubiquitin family.

The protein is Ubiquitin-like protein FUBI (Fau) of Mus spicilegus (Steppe mouse).